A 25-amino-acid polypeptide reads, in one-letter code: Pregnancy-associated glycoprotein 74 (25 aa).

2 N-linked (GlcNAc...) asparagine glycosylation sites follow: asparagine 4 and asparagine 21.

This sequence belongs to the peptidase A1 family. Post-translationally, N-glycosylated. In terms of tissue distribution, placental cotyledons.

Its subcellular location is the secreted. The protein localises to the extracellular space. The chain is Pregnancy-associated glycoprotein 74 from Bison bison (American bison).